Consider the following 317-residue polypeptide: Probable deoxyhypusine synthase (317 aa).

Residue lysine 285 is the Nucleophile of the active site.

Belongs to the deoxyhypusine synthase family. It depends on NAD(+) as a cofactor.

The enzyme catalyses [eIF5A protein]-L-lysine + spermidine = [eIF5A protein]-deoxyhypusine + propane-1,3-diamine. Its pathway is protein modification; eIF5A hypusination. Its function is as follows. Catalyzes the NAD-dependent oxidative cleavage of spermidine and the subsequent transfer of the butylamine moiety of spermidine to the epsilon-amino group of a specific lysine residue of the eIF-5A precursor protein to form the intermediate deoxyhypusine residue. The chain is Probable deoxyhypusine synthase (dys) from Methanosarcina thermophila.